We begin with the raw amino-acid sequence, 526 residues long: Aspartate ammonia-lyase (526 aa).

The segment at 1 to 44 (MSKTSNKSSADSKNDAKAEDIVNGENQIATNESQSSDSAAVSER) is disordered. Residues 10–20 (ADSKNDAKAED) show a composition bias toward basic and acidic residues. Polar residues predominate over residues 24-39 (GENQIATNESQSSDSA). Positions 155, 194, 195, 196, and 241 each coordinate L-aspartate. The tract at residues 371 to 380 (GSSIMPAKVN) is SS loop. The active-site Proton acceptor is serine 372. L-aspartate is bound by residues serine 373 and lysine 378.

This sequence belongs to the class-II fumarase/aspartase family. Aspartase subfamily. As to quaternary structure, homotetramer.

It carries out the reaction L-aspartate = fumarate + NH4(+). In terms of biological role, catalyzes the reversible conversion of L-aspartate to fumarate and ammonia. The protein is Aspartate ammonia-lyase of Corynebacterium glutamicum (strain ATCC 13032 / DSM 20300 / JCM 1318 / BCRC 11384 / CCUG 27702 / LMG 3730 / NBRC 12168 / NCIMB 10025 / NRRL B-2784 / 534).